A 924-amino-acid chain; its full sequence is Protein SMAX1-LIKE 2 (924 aa).

Residues 8–181 (IQQTLTPEAA…SAIEQSLIGN (174 aa)) enclose the Clp R domain. Positions 12-83 (LTPEAATVLN…LCFSVALERL (72 aa)) are repeat 1. Positions 86 to 105 (TSTTTTTTSSSSSSSPSQTQ) are enriched in low complexity. The segment at 86-107 (TSTTTTTTSSSSSSSPSQTQEP) is disordered. Residues 109–181 (LSNALTAALK…SAIEQSLIGN (73 aa)) form a repeat 2 region. A disordered region spans residues 522–552 (TRSDITPPGSPVGTDLVLGRPNRGLSSPEKK). Positions 780–784 (FDLNE) match the EAR motif.

Belongs to the ClpA/ClpB family. As to quaternary structure, interacts probably with TPL/TPR in an EAR-motif dependent manner. As to expression, expressed in seedlings and leaves. Detected in roots and axillary branches.

Probable component of a transcriptional corepressor complex that acts specifically in the karrikin pathway. Controls seedling growth redundantly with SMAX1, but is not involved in leaf morphology, shoot branching or germination control. In Arabidopsis thaliana (Mouse-ear cress), this protein is Protein SMAX1-LIKE 2.